Consider the following 120-residue polypeptide: Large ribosomal subunit protein uL22 (120 aa).

It belongs to the universal ribosomal protein uL22 family. As to quaternary structure, part of the 50S ribosomal subunit.

This protein binds specifically to 23S rRNA; its binding is stimulated by other ribosomal proteins, e.g. L4, L17, and L20. It is important during the early stages of 50S assembly. It makes multiple contacts with different domains of the 23S rRNA in the assembled 50S subunit and ribosome. Its function is as follows. The globular domain of the protein is located near the polypeptide exit tunnel on the outside of the subunit, while an extended beta-hairpin is found that lines the wall of the exit tunnel in the center of the 70S ribosome. This is Large ribosomal subunit protein uL22 from Corynebacterium diphtheriae (strain ATCC 700971 / NCTC 13129 / Biotype gravis).